The primary structure comprises 370 residues: Holliday junction branch migration complex subunit RuvB (370 aa).

The segment at 1 to 53 (MAILSSQKQPLEPEPSKNPQSVQQPGLPPSTPEQGLLTAEVSPEERLSRTDDI) is disordered. Residues 13 to 214 (PEPSKNPQSV…FGLIQRLRFY (202 aa)) form a large ATPase domain (RuvB-L) region. A compositionally biased stretch (basic and acidic residues) spans 43–53 (PEERLSRTDDI). ATP contacts are provided by residues Ile53, Arg54, Gly95, Lys98, Thr99, Thr100, 161-163 (EDF), Arg204, Tyr214, and Arg251. Residue Thr99 coordinates Mg(2+). The tract at residues 215–285 (EPEELSQIIL…IASEALQLFN (71 aa)) is small ATPAse domain (RuvB-S). The tract at residues 288–370 (PCGLDWTDRR…TPPDGQLSLL (83 aa)) is head domain (RuvB-H). DNA contacts are provided by Arg343 and Arg348.

The protein belongs to the RuvB family. In terms of assembly, homohexamer. Forms an RuvA(8)-RuvB(12)-Holliday junction (HJ) complex. HJ DNA is sandwiched between 2 RuvA tetramers; dsDNA enters through RuvA and exits via RuvB. An RuvB hexamer assembles on each DNA strand where it exits the tetramer. Each RuvB hexamer is contacted by two RuvA subunits (via domain III) on 2 adjacent RuvB subunits; this complex drives branch migration. In the full resolvosome a probable DNA-RuvA(4)-RuvB(12)-RuvC(2) complex forms which resolves the HJ.

The protein resides in the cytoplasm. The catalysed reaction is ATP + H2O = ADP + phosphate + H(+). In terms of biological role, the RuvA-RuvB-RuvC complex processes Holliday junction (HJ) DNA during genetic recombination and DNA repair, while the RuvA-RuvB complex plays an important role in the rescue of blocked DNA replication forks via replication fork reversal (RFR). RuvA specifically binds to HJ cruciform DNA, conferring on it an open structure. The RuvB hexamer acts as an ATP-dependent pump, pulling dsDNA into and through the RuvAB complex. RuvB forms 2 homohexamers on either side of HJ DNA bound by 1 or 2 RuvA tetramers; 4 subunits per hexamer contact DNA at a time. Coordinated motions by a converter formed by DNA-disengaged RuvB subunits stimulates ATP hydrolysis and nucleotide exchange. Immobilization of the converter enables RuvB to convert the ATP-contained energy into a lever motion, pulling 2 nucleotides of DNA out of the RuvA tetramer per ATP hydrolyzed, thus driving DNA branch migration. The RuvB motors rotate together with the DNA substrate, which together with the progressing nucleotide cycle form the mechanistic basis for DNA recombination by continuous HJ branch migration. Branch migration allows RuvC to scan DNA until it finds its consensus sequence, where it cleaves and resolves cruciform DNA. This chain is Holliday junction branch migration complex subunit RuvB, found in Cyanothece sp. (strain PCC 7425 / ATCC 29141).